Here is a 283-residue protein sequence, read N- to C-terminus: MEERAVKLAVYGKGGIGKSTTSCNLSVALAKRGKKVLQIGCDPKHDSTFTLTGFLIPTIIDTLEAKGYHYEDIYPEDVIYRGYGGVDCVEAGGPPAGAGCGGYVVGETVKLLKELNAFDEYDVILFDVLGDVVCGGFAAPLNYADYCVIVTDNGFDALFAANRIAASVREKAKTRKLRLAGLIGNRTSKRDLIDQYVSAVPMPVLEVLPLVEDIRISRVKGKTLFEMAETDPSLEPVCQYYLNIADELLARPEGIVPRPAEDRELFALLSDFYKTPVREPALV.

Residues 15–20 and Lys-44 each bind ATP; that span reads GIGKST. Residue Ser-19 participates in Mg(2+) binding. [4Fe-4S] cluster-binding residues include Cys-100 and Cys-134. 185–186 lines the ATP pocket; it reads NR.

It belongs to the NifH/BchL/ChlL family. Homodimer. Protochlorophyllide reductase is composed of three subunits; ChlL, ChlN and ChlB. [4Fe-4S] cluster is required as a cofactor.

The enzyme catalyses chlorophyllide a + oxidized 2[4Fe-4S]-[ferredoxin] + 2 ADP + 2 phosphate = protochlorophyllide a + reduced 2[4Fe-4S]-[ferredoxin] + 2 ATP + 2 H2O. The protein operates within porphyrin-containing compound metabolism; chlorophyll biosynthesis (light-independent). Component of the dark-operative protochlorophyllide reductase (DPOR) that uses Mg-ATP and reduced ferredoxin to reduce ring D of protochlorophyllide (Pchlide) to form chlorophyllide a (Chlide). This reaction is light-independent. The L component serves as a unique electron donor to the NB-component of the complex, and binds Mg-ATP. The protein is Light-independent protochlorophyllide reductase iron-sulfur ATP-binding protein of Synechococcus sp. (strain JA-3-3Ab) (Cyanobacteria bacterium Yellowstone A-Prime).